Reading from the N-terminus, the 205-residue chain is GTP cyclohydrolase-2 (205 aa).

Residue 49 to 53 (RIHSE) participates in GTP binding. Residues C54, C65, and C67 each contribute to the Zn(2+) site. GTP contacts are provided by residues Q70, 92–94 (EGR), and T114. Residue D126 is the Proton acceptor of the active site. The active-site Nucleophile is R128. GTP contacts are provided by T149 and K154.

This sequence belongs to the GTP cyclohydrolase II family. Requires Zn(2+) as cofactor.

The enzyme catalyses GTP + 4 H2O = 2,5-diamino-6-hydroxy-4-(5-phosphoribosylamino)-pyrimidine + formate + 2 phosphate + 3 H(+). Its pathway is cofactor biosynthesis; riboflavin biosynthesis; 5-amino-6-(D-ribitylamino)uracil from GTP: step 1/4. Its function is as follows. Catalyzes the conversion of GTP to 2,5-diamino-6-ribosylamino-4(3H)-pyrimidinone 5'-phosphate (DARP), formate and pyrophosphate. This chain is GTP cyclohydrolase-2, found in Shewanella denitrificans (strain OS217 / ATCC BAA-1090 / DSM 15013).